We begin with the raw amino-acid sequence, 306 residues long: MGSGGGGCGRNGAVRQYIRSKVPRLRWTGELHCSFVQAIEFLGGQDKATPKLILQLMGVKGLTISHVKSHLQMYRCSRLGSHGTGRRSEMQPQLQRKHSCGADEQVPREFLCPPLKRTRMGTEATYKGMQGSQGISEMRTTGTQYCIDDYMQAMAMERRIKEEGLRWQRDAAAAAAADGGAAASNLQTVGCSVQESDPFKIIKPEVHHLGPVLKLQCSKVENSGFISSSTGTAARDQPEPPPLEKCSLSLSLGPDPKCMPAIASSPSESSCILSSSSRSFSDCSGNSGCLVAPGVNLELSMSICGS.

Residues 19 to 79 (RSKVPRLRWT…HLQMYRCSRL (61 aa)) form the HTH myb-type domain. Positions 50–75 (PKLILQLMGVKGLTISHVKSHLQMYR) form a DNA-binding region, H-T-H motif.

As to quaternary structure, interacts with TPR1, TPR2 and TPR3. In terms of tissue distribution, expressed in roots, leaves, leaf sheaths, culms, panicles, lemmas, paleas, lodicules, stamens, and pistils.

The protein localises to the nucleus. Functionally, transcriptional repressor that plays a role in the regulation of organ identity and spikelet meristem determinacy. Interacts with the TPR corepressors to possibly repress the expression of downstream target genes. The protein is Myb family transcription factor MOF1 of Oryza sativa subsp. japonica (Rice).